A 225-amino-acid polypeptide reads, in one-letter code: Enolase-phosphatase E1 (225 aa).

The protein belongs to the HAD-like hydrolase superfamily. MasA/MtnC family. As to quaternary structure, monomer. Requires Mg(2+) as cofactor.

It catalyses the reaction 5-methylsulfanyl-2,3-dioxopentyl phosphate + H2O = 1,2-dihydroxy-5-(methylsulfanyl)pent-1-en-3-one + phosphate. The protein operates within amino-acid biosynthesis; L-methionine biosynthesis via salvage pathway; L-methionine from S-methyl-5-thio-alpha-D-ribose 1-phosphate: step 3/6. Its pathway is amino-acid biosynthesis; L-methionine biosynthesis via salvage pathway; L-methionine from S-methyl-5-thio-alpha-D-ribose 1-phosphate: step 4/6. In terms of biological role, bifunctional enzyme that catalyzes the enolization of 2,3-diketo-5-methylthiopentyl-1-phosphate (DK-MTP-1-P) into the intermediate 2-hydroxy-3-keto-5-methylthiopentenyl-1-phosphate (HK-MTPenyl-1-P), which is then dephosphorylated to form the acireductone 1,2-dihydroxy-3-keto-5-methylthiopentene (DHK-MTPene). The protein is Enolase-phosphatase E1 of Shewanella woodyi (strain ATCC 51908 / MS32).